The primary structure comprises 151 residues: uncharacterized protein (151 aa).

The tract at residues 1–77 (MSLLGGMWKS…LGSNPISSSR (77 aa)) is disordered. Low complexity-rich tracts occupy residues 19–54 (PKPSSNPLRSSGLNSGMSSRLNSKSSLRSGHSRSSN) and 63–76 (SISGSLGSNPISSS).

This is an uncharacterized protein from Methanothermobacter marburgensis (strain ATCC BAA-927 / DSM 2133 / JCM 14651 / NBRC 100331 / OCM 82 / Marburg) (Methanobacterium thermoautotrophicum).